The sequence spans 198 residues: Large ribosomal subunit protein bL25 (198 aa).

Belongs to the bacterial ribosomal protein bL25 family. CTC subfamily. As to quaternary structure, part of the 50S ribosomal subunit; part of the 5S rRNA/L5/L18/L25 subcomplex. Contacts the 5S rRNA. Binds to the 5S rRNA independently of L5 and L18.

Its function is as follows. This is one of the proteins that binds to the 5S RNA in the ribosome where it forms part of the central protuberance. The protein is Large ribosomal subunit protein bL25 of Gloeothece citriformis (strain PCC 7424) (Cyanothece sp. (strain PCC 7424)).